Here is a 561-residue protein sequence, read N- to C-terminus: Oxygen-dependent choline dehydrogenase (561 aa).

7-36 (DYIIVGAGSAGNVLASRLAEDADVTVLLLE) serves as a coordination point for FAD. Residue histidine 474 is the Proton acceptor of the active site.

Belongs to the GMC oxidoreductase family. Requires FAD as cofactor.

It carries out the reaction choline + A = betaine aldehyde + AH2. It catalyses the reaction betaine aldehyde + NAD(+) + H2O = glycine betaine + NADH + 2 H(+). Its pathway is amine and polyamine biosynthesis; betaine biosynthesis via choline pathway; betaine aldehyde from choline (cytochrome c reductase route): step 1/1. In terms of biological role, involved in the biosynthesis of the osmoprotectant glycine betaine. Catalyzes the oxidation of choline to betaine aldehyde and betaine aldehyde to glycine betaine at the same rate. The chain is Oxygen-dependent choline dehydrogenase from Paraburkholderia xenovorans (strain LB400).